The sequence spans 366 residues: UDP-N-acetylglucosamine--N-acetylmuramyl-(pentapeptide) pyrophosphoryl-undecaprenol N-acetylglucosamine transferase (366 aa).

UDP-N-acetyl-alpha-D-glucosamine contacts are provided by residues 14 to 16 (TGG), Asn125, Arg168, Ser196, and Gln297.

Belongs to the glycosyltransferase 28 family. MurG subfamily.

It localises to the cell inner membrane. It carries out the reaction di-trans,octa-cis-undecaprenyl diphospho-N-acetyl-alpha-D-muramoyl-L-alanyl-D-glutamyl-meso-2,6-diaminopimeloyl-D-alanyl-D-alanine + UDP-N-acetyl-alpha-D-glucosamine = di-trans,octa-cis-undecaprenyl diphospho-[N-acetyl-alpha-D-glucosaminyl-(1-&gt;4)]-N-acetyl-alpha-D-muramoyl-L-alanyl-D-glutamyl-meso-2,6-diaminopimeloyl-D-alanyl-D-alanine + UDP + H(+). The protein operates within cell wall biogenesis; peptidoglycan biosynthesis. In terms of biological role, cell wall formation. Catalyzes the transfer of a GlcNAc subunit on undecaprenyl-pyrophosphoryl-MurNAc-pentapeptide (lipid intermediate I) to form undecaprenyl-pyrophosphoryl-MurNAc-(pentapeptide)GlcNAc (lipid intermediate II). In Rhodopseudomonas palustris (strain BisB5), this protein is UDP-N-acetylglucosamine--N-acetylmuramyl-(pentapeptide) pyrophosphoryl-undecaprenol N-acetylglucosamine transferase.